The sequence spans 154 residues: Prefoldin subunit 2 (154 aa).

Disordered stretches follow at residues 1 to 20 and 126 to 154; these read MADS…GKGA and LMGE…VLVS. The segment covering 9-18 has biased composition (gly residues); sequence GKSGGSGAGK. Over residues 126 to 139 the composition is skewed to basic and acidic residues; that stretch reads LMGEDEKPAAKENS. The span at 140–154 shows a compositional bias: low complexity; it reads EGAGAKASSAGVLVS.

This sequence belongs to the prefoldin subunit beta family. In terms of assembly, heterohexamer of two PFD-alpha type and four PFD-beta type subunits. Component of the PAQosome complex which is responsible for the biogenesis of several protein complexes and which consists of R2TP complex members RUVBL1, RUVBL2, RPAP3 and PIH1D1, URI complex members PFDN2, PFDN6, PDRG1, UXT and URI1 as well as ASDURF, POLR2E and DNAAF10/WDR92. Interacts with URI1; the interaction is phosphorylation-dependent and occurs in a growth-dependent manner.

The protein localises to the nucleus. It is found in the cytoplasm. It localises to the mitochondrion. Its function is as follows. Binds specifically to cytosolic chaperonin (c-CPN) and transfers target proteins to it. Binds to nascent polypeptide chain and promotes folding in an environment in which there are many competing pathways for nonnative proteins. The polypeptide is Prefoldin subunit 2 (Pfdn2) (Mus musculus (Mouse)).